We begin with the raw amino-acid sequence, 85 residues long: NAD(P)H-quinone oxidoreductase subunit O (85 aa).

Belongs to the complex I NdhO subunit family. NDH-1 can be composed of about 15 different subunits; different subcomplexes with different compositions have been identified which probably have different functions.

The protein localises to the cellular thylakoid membrane. It catalyses the reaction a plastoquinone + NADH + (n+1) H(+)(in) = a plastoquinol + NAD(+) + n H(+)(out). The enzyme catalyses a plastoquinone + NADPH + (n+1) H(+)(in) = a plastoquinol + NADP(+) + n H(+)(out). Its function is as follows. NDH-1 shuttles electrons from an unknown electron donor, via FMN and iron-sulfur (Fe-S) centers, to quinones in the respiratory and/or the photosynthetic chain. The immediate electron acceptor for the enzyme in this species is believed to be plastoquinone. Couples the redox reaction to proton translocation, and thus conserves the redox energy in a proton gradient. Cyanobacterial NDH-1 also plays a role in inorganic carbon-concentration. This is NAD(P)H-quinone oxidoreductase subunit O from Synechococcus sp. (strain WH7803).